Consider the following 317-residue polypeptide: tRNA(Met) cytidine acetate ligase (317 aa).

Residues 6–19 (IAEY…HIYQ), Gly-100, Asn-157, and Arg-182 each bind ATP.

Belongs to the TmcAL family.

The protein resides in the cytoplasm. It carries out the reaction cytidine(34) in elongator tRNA(Met) + acetate + ATP = N(4)-acetylcytidine(34) in elongator tRNA(Met) + AMP + diphosphate. Functionally, catalyzes the formation of N(4)-acetylcytidine (ac(4)C) at the wobble position of elongator tRNA(Met), using acetate and ATP as substrates. First activates an acetate ion to form acetyladenylate (Ac-AMP) and then transfers the acetyl group to tRNA to form ac(4)C34. The chain is tRNA(Met) cytidine acetate ligase from Mesomycoplasma hyopneumoniae (strain J / ATCC 25934 / NCTC 10110) (Mycoplasma hyopneumoniae).